A 151-amino-acid polypeptide reads, in one-letter code: MKKIDVKILDSRIGAQFPLPAYATTGSAGLDLRALTDEAFEIQPGETKLIPTGLSVYIADPQLAAVILPRSGLGHKHGVVLGNLVGLIDSDYQGPLMVSMWNRSDKPFKVEVGDRIAQLVFVPVVQAEFNIVAEFEQTDRGEGGFGHSGKK.

Substrate-binding positions include 70 to 72 (RSG), Asn-83, 87 to 89 (LID), and Met-97.

The protein belongs to the dUTPase family. Mg(2+) serves as cofactor.

It carries out the reaction dUTP + H2O = dUMP + diphosphate + H(+). Its pathway is pyrimidine metabolism; dUMP biosynthesis; dUMP from dCTP (dUTP route): step 2/2. This enzyme is involved in nucleotide metabolism: it produces dUMP, the immediate precursor of thymidine nucleotides and it decreases the intracellular concentration of dUTP so that uracil cannot be incorporated into DNA. The polypeptide is Deoxyuridine 5'-triphosphate nucleotidohydrolase (Actinobacillus succinogenes (strain ATCC 55618 / DSM 22257 / CCUG 43843 / 130Z)).